The chain runs to 494 residues: Glutamate--tRNA ligase (494 aa).

The short motif at 10 to 20 is the 'HIGH' region element; sequence PSPTGDPHVGT. Residues C107, C109, C134, and H136 each contribute to the Zn(2+) site. A 'KMSKS' region motif is present at residues 251-255; sequence KLSKR. K254 contributes to the ATP binding site.

It belongs to the class-I aminoacyl-tRNA synthetase family. Glutamate--tRNA ligase type 1 subfamily. As to quaternary structure, monomer. Requires Zn(2+) as cofactor.

The protein localises to the cytoplasm. It carries out the reaction tRNA(Glu) + L-glutamate + ATP = L-glutamyl-tRNA(Glu) + AMP + diphosphate. Functionally, catalyzes the attachment of glutamate to tRNA(Glu) in a two-step reaction: glutamate is first activated by ATP to form Glu-AMP and then transferred to the acceptor end of tRNA(Glu). This chain is Glutamate--tRNA ligase, found in Pseudomonas aeruginosa (strain ATCC 15692 / DSM 22644 / CIP 104116 / JCM 14847 / LMG 12228 / 1C / PRS 101 / PAO1).